An 843-amino-acid polypeptide reads, in one-letter code: Elongation factor 2 (843 aa).

Positions H17 to H344 constitute a tr-type G domain. GTP is bound by residues A26–S33 and N158–D161. H700 bears the Diphthamide mark. Phosphoserine is present on S837.

It belongs to the TRAFAC class translation factor GTPase superfamily. Classic translation factor GTPase family. In terms of assembly, may interact with glutaredoxins (Grxs). Expressed in root, stem, leaves, flowers and siliques.

The protein resides in the cytoplasm. It carries out the reaction GTP + H2O = GDP + phosphate + H(+). It participates in protein biosynthesis; polypeptide chain elongation. Its function is as follows. Catalyzes the GTP-dependent ribosomal translocation step during translation elongation. During this step, the ribosome changes from the pre-translocational (PRE) to the post-translocational (POST) state as the newly formed A-site-bound peptidyl-tRNA and P-site-bound deacylated tRNA move to the P and E sites, respectively. Catalyzes the coordinated movement of the two tRNA molecules, the mRNA and conformational changes in the ribosome. Involved in cold responses leading to freezing tolerance via the induction of cold-responsive genes. The chain is Elongation factor 2 from Arabidopsis thaliana (Mouse-ear cress).